A 581-amino-acid chain; its full sequence is Solute carrier family 15 member 3 (581 aa).

Residues Met1–Gly14 are compositionally biased toward basic and acidic residues. The disordered stretch occupies residues Met1–Gly26. A helical membrane pass occupies residues Val38 to Leu58. 2 N-linked (GlcNAc...) asparagine glycosylation sites follow: Asn61 and Asn66. A run of 3 helical transmembrane segments spans residues Ala76–Val96, Ala103–Phe123, and Pro155–Val175. N-linked (GlcNAc...) asparagine glycosylation is present at Asn178. Residues Asn200–Ile220 traverse the membrane as a helical segment. The N-linked (GlcNAc...) asparagine glycan is linked to Asn223. Transmembrane regions (helical) follow at residues Ile232–Ile252 and Phe310–Tyr330. N-linked (GlcNAc...) asparagine glycosylation occurs at Asn356. Helical transmembrane passes span Thr369–Leu389 and Met411–Glu431. An N-linked (GlcNAc...) asparagine glycan is attached at Asn439. 3 consecutive transmembrane segments (helical) span residues Ile458–Pro478, Gly497–Leu517, and Leu540–Ala560.

It belongs to the major facilitator superfamily. Proton-dependent oligopeptide transporter (POT/PTR) (TC 2.A.17) family.

Its subcellular location is the lysosome membrane. It localises to the endosome membrane. It catalyses the reaction glycylglycylglycine(out) + n H(+)(out) = glycylglycylglycine(in) + n H(+)(in). It carries out the reaction carnosine(out) + n H(+)(out) = carnosine(in) + n H(+)(in). The catalysed reaction is L-histidine(out) + n H(+)(out) = L-histidine(in) + n H(+)(in). The enzyme catalyses N-acetyl-D-muramoyl-L-alanyl-D-isoglutamine(out) + n H(+)(out) = N-acetyl-D-muramoyl-L-alanyl-D-isoglutamine(in) + n H(+)(in). Proton-coupled amino-acid transporter that transports free histidine and certain di- and tripeptides, and is involved in innate immune response. Also able to transport carnosine. Involved in the detection of microbial pathogens by toll-like receptors (TLRs) and NOD-like receptors (NLRs), probably by mediating transport of bacterial peptidoglycans across the endolysosomal membrane: catalyzes the transport of certain bacterial peptidoglycans, such as muramyl dipeptide (MDP), the NOD2 ligand. The sequence is that of Solute carrier family 15 member 3 from Homo sapiens (Human).